We begin with the raw amino-acid sequence, 102 residues long: UPF0213 protein in potE 3'region (102 aa).

In terms of domain architecture, GIY-YIG spans 6–81 (SPWHLYMLRL…KQLSKTQKER (76 aa)).

The protein belongs to the UPF0213 family.

The sequence is that of UPF0213 protein in potE 3'region from Serratia liquefaciens.